The chain runs to 176 residues: Cytochrome b (176 aa).

3 helical membrane-spanning segments follow: residues phenylalanine 33–methionine 53, tryptophan 77–valine 98, and tryptophan 113–leucine 133. The heme b site is built by histidine 83 and histidine 97.

The protein belongs to the cytochrome b family. The cytochrome bc1 complex contains 11 subunits: 3 respiratory subunits (MT-CYB, CYC1 and UQCRFS1), 2 core proteins (UQCRC1 and UQCRC2) and 6 low-molecular weight proteins (UQCRH/QCR6, UQCRB/QCR7, UQCRQ/QCR8, UQCR10/QCR9, UQCR11/QCR10 and a cleavage product of UQCRFS1). This cytochrome bc1 complex then forms a dimer. Requires heme b as cofactor.

Its subcellular location is the mitochondrion inner membrane. Component of the ubiquinol-cytochrome c reductase complex (complex III or cytochrome b-c1 complex) that is part of the mitochondrial respiratory chain. The b-c1 complex mediates electron transfer from ubiquinol to cytochrome c. Contributes to the generation of a proton gradient across the mitochondrial membrane that is then used for ATP synthesis. In Corynorhinus rafinesquii (Rafinesque's big-eared bat), this protein is Cytochrome b (MT-CYB).